Here is a 122-residue protein sequence, read N- to C-terminus: Large ribosomal subunit protein uL14 (122 aa).

The protein belongs to the universal ribosomal protein uL14 family. As to quaternary structure, part of the 50S ribosomal subunit. Forms a cluster with proteins L3 and L19. In the 70S ribosome, L14 and L19 interact and together make contacts with the 16S rRNA in bridges B5 and B8.

Its function is as follows. Binds to 23S rRNA. Forms part of two intersubunit bridges in the 70S ribosome. This Trichormus variabilis (strain ATCC 29413 / PCC 7937) (Anabaena variabilis) protein is Large ribosomal subunit protein uL14.